The chain runs to 181 residues: Inner membrane-spanning protein YciB (181 aa).

Transmembrane regions (helical) follow at residues 10–30 (LVIFFAVYKFFDIYIASGALI), 50–70 (MHLITFAMVTVFGTLTLVFHD), 72–92 (AFIKWKVTIIYALFALALGIS), 118–138 (ITWYWVIFFATCGLVNIYVAF), and 148–168 (FKVFGLTALTLVNTVITVFYL).

It belongs to the YciB family.

The protein resides in the cell inner membrane. Plays a role in cell envelope biogenesis, maintenance of cell envelope integrity and membrane homeostasis. This is Inner membrane-spanning protein YciB from Shewanella putrefaciens (strain CN-32 / ATCC BAA-453).